A 780-amino-acid chain; its full sequence is ATP-dependent 6-phosphofructokinase, liver type (780 aa).

Ala-2 is modified (N-acetylalanine). Residues Ala-2–His-390 form an N-terminal catalytic PFK domain 1 region. Residues Gly-25, Arg-88–Cys-89, and Gly-118–Ser-121 each bind ATP. Asp-119 provides a ligand contact to Mg(2+). Residues Ser-164 to Asp-166, Arg-201, Met-208 to Arg-210, Glu-264, Arg-292, and His-298 to Arg-301 contribute to the substrate site. Asp-166 acts as the Proton acceptor in catalysis. At Ser-377 the chain carries Phosphoserine. Residues Gln-391 to Phe-400 form an interdomain linker region. Residues Ser-401–Phe-780 are C-terminal regulatory PFK domain 2. Beta-D-fructose 2,6-bisphosphate is bound by residues Arg-470, Thr-527–Asn-531, Arg-565, Met-572–Gly-574, and Glu-628. O-linked (GlcNAc) serine glycosylation is present at Ser-529. Phosphotyrosine is present on Tyr-640. Residues Arg-654, His-660–Gln-663, and Arg-734 each bind beta-D-fructose 2,6-bisphosphate. Ser-775 carries the post-translational modification Phosphoserine.

The protein belongs to the phosphofructokinase type A (PFKA) family. ATP-dependent PFK group I subfamily. Eukaryotic two domain clade 'E' sub-subfamily. As to quaternary structure, homo- and heterotetramers. Phosphofructokinase (PFK) enzyme functions as a tetramer composed of different combinations of 3 types of subunits, called PFKM (M), PFKL (L) and PFKP (P). The composition of the PFK tetramer differs according to the tissue type it is present in. The kinetic and regulatory properties of the tetrameric enzyme are dependent on the subunit composition, hence can vary across tissues. The cofactor is Mg(2+). Post-translationally, glcNAcylation at Ser-529 by OGT decreases enzyme activity, leading to redirect glucose flux through the oxidative pentose phosphate pathway. Glycosylation is stimulated by both hypoxia and glucose deprivation.

The protein resides in the cytoplasm. It catalyses the reaction beta-D-fructose 6-phosphate + ATP = beta-D-fructose 1,6-bisphosphate + ADP + H(+). Its pathway is carbohydrate degradation; glycolysis; D-glyceraldehyde 3-phosphate and glycerone phosphate from D-glucose: step 3/4. Its activity is regulated as follows. Allosterically activated by ADP, AMP, or fructose 2,6-bisphosphate, and allosterically inhibited by ATP or citrate. GlcNAcylation by OGT overcomes allosteric regulation. Catalyzes the phosphorylation of D-fructose 6-phosphate to fructose 1,6-bisphosphate by ATP, the first committing step of glycolysis. Negatively regulates the phagocyte oxidative burst in response to bacterial infection by controlling cellular NADPH biosynthesis and NADPH oxidase-derived reactive oxygen species. Upon macrophage activation, drives the metabolic switch toward glycolysis, thus preventing glucose turnover that produces NADPH via pentose phosphate pathway. In Rattus norvegicus (Rat), this protein is ATP-dependent 6-phosphofructokinase, liver type (Pfkl).